Reading from the N-terminus, the 204-residue chain is Protein C (204 aa).

Residues 1–78 are disordered; it reads MPSFLRGILK…TEQSQRRPKI (78 aa). Basic and acidic residues predominate over residues 10–20; sequence KPKERHHENKN. The span at 25-34 shows a compositional bias: low complexity; the sequence is SSDSLTSSYP.

Belongs to the respirovirus protein C family.

The sequence is that of Protein C (P/V/C) from Homo sapiens (Human).